The following is a 340-amino-acid chain: 4-hydroxy-3-methylbut-2-enyl diphosphate reductase (340 aa).

A [4Fe-4S] cluster-binding site is contributed by cysteine 18. Residues histidine 47 and histidine 83 each contribute to the (2E)-4-hydroxy-3-methylbut-2-enyl diphosphate site. The dimethylallyl diphosphate site is built by histidine 47 and histidine 83. Histidine 47 and histidine 83 together coordinate isopentenyl diphosphate. Cysteine 105 is a [4Fe-4S] cluster binding site. Residue histidine 133 coordinates (2E)-4-hydroxy-3-methylbut-2-enyl diphosphate. Histidine 133 contacts dimethylallyl diphosphate. Residue histidine 133 participates in isopentenyl diphosphate binding. Catalysis depends on glutamate 135, which acts as the Proton donor. Threonine 174 contributes to the (2E)-4-hydroxy-3-methylbut-2-enyl diphosphate binding site. Cysteine 204 is a binding site for [4Fe-4S] cluster. (2E)-4-hydroxy-3-methylbut-2-enyl diphosphate-binding residues include serine 232, serine 233, asparagine 234, and serine 277. Dimethylallyl diphosphate contacts are provided by serine 232, serine 233, asparagine 234, and serine 277. The isopentenyl diphosphate site is built by serine 232, serine 233, asparagine 234, and serine 277.

This sequence belongs to the IspH family. The cofactor is [4Fe-4S] cluster.

The enzyme catalyses isopentenyl diphosphate + 2 oxidized [2Fe-2S]-[ferredoxin] + H2O = (2E)-4-hydroxy-3-methylbut-2-enyl diphosphate + 2 reduced [2Fe-2S]-[ferredoxin] + 2 H(+). The catalysed reaction is dimethylallyl diphosphate + 2 oxidized [2Fe-2S]-[ferredoxin] + H2O = (2E)-4-hydroxy-3-methylbut-2-enyl diphosphate + 2 reduced [2Fe-2S]-[ferredoxin] + 2 H(+). It functions in the pathway isoprenoid biosynthesis; dimethylallyl diphosphate biosynthesis; dimethylallyl diphosphate from (2E)-4-hydroxy-3-methylbutenyl diphosphate: step 1/1. Its pathway is isoprenoid biosynthesis; isopentenyl diphosphate biosynthesis via DXP pathway; isopentenyl diphosphate from 1-deoxy-D-xylulose 5-phosphate: step 6/6. Its function is as follows. Catalyzes the conversion of 1-hydroxy-2-methyl-2-(E)-butenyl 4-diphosphate (HMBPP) into a mixture of isopentenyl diphosphate (IPP) and dimethylallyl diphosphate (DMAPP). Acts in the terminal step of the DOXP/MEP pathway for isoprenoid precursor biosynthesis. The polypeptide is 4-hydroxy-3-methylbut-2-enyl diphosphate reductase (Bartonella quintana (strain Toulouse) (Rochalimaea quintana)).